We begin with the raw amino-acid sequence, 114 residues long: T cell receptor beta variable 28 (114 aa).

Positions 1 to 26 (MGIRLLCRVAFCFLAVGLVDVKVTQS) are cleaved as a signal peptide. One can recognise an Ig-like domain in the interval 27-114 (SRYLVKRTGE…TSMYLCASSL (88 aa)). Cys-42 and Cys-110 are disulfide-bonded. An N-linked (GlcNAc...) asparagine glycan is attached at Asn-103.

Alpha-beta TR is a heterodimer composed of an alpha and beta chain; disulfide-linked. The alpha-beta TR is associated with the transmembrane signaling CD3 coreceptor proteins to form the TR-CD3 (TcR or TCR). The assembly of alpha-beta TR heterodimers with CD3 occurs in the endoplasmic reticulum where a single alpha-beta TR heterodimer associates with one CD3D-CD3E heterodimer, one CD3G-CD3E heterodimer and one CD247 homodimer forming a stable octameric structure. CD3D-CD3E and CD3G-CD3E heterodimers preferentially associate with TR alpha and TR beta chains, respectively. The association of the CD247 homodimer is the last step of TcR assembly in the endoplasmic reticulum and is required for transport to the cell surface.

The protein localises to the cell membrane. Functionally, v region of the variable domain of T cell receptor (TR) beta chain that participates in the antigen recognition. Alpha-beta T cell receptors are antigen specific receptors which are essential to the immune response and are present on the cell surface of T lymphocytes. Recognize peptide-major histocompatibility (MH) (pMH) complexes that are displayed by antigen presenting cells (APC), a prerequisite for efficient T cell adaptive immunity against pathogens. Binding of alpha-beta TR to pMH complex initiates TR-CD3 clustering on the cell surface and intracellular activation of LCK that phosphorylates the ITAM motifs of CD3G, CD3D, CD3E and CD247 enabling the recruitment of ZAP70. In turn ZAP70 phosphorylates LAT, which recruits numerous signaling molecules to form the LAT signalosome. The LAT signalosome propagates signal branching to three major signaling pathways, the calcium, the mitogen-activated protein kinase (MAPK) kinase and the nuclear factor NF-kappa-B (NF-kB) pathways, leading to the mobilization of transcription factors that are critical for gene expression and essential for T cell growth and differentiation. The T cell repertoire is generated in the thymus, by V-(D)-J rearrangement. This repertoire is then shaped by intrathymic selection events to generate a peripheral T cell pool of self-MH restricted, non-autoaggressive T cells. Post-thymic interaction of alpha-beta TR with the pMH complexes shapes TR structural and functional avidity. This is T cell receptor beta variable 28 from Homo sapiens (Human).